We begin with the raw amino-acid sequence, 432 residues long: Alcohol acyltransferase 9 (432 aa).

Catalysis depends on proton acceptor residues His156 and Asp379.

Belongs to the plant acyltransferase family. As to expression, expressed in fruit.

It carries out the reaction 2-(methylsulfanyl)acetyl-CoA + butan-1-ol = butyl 2-(methylsulfanyl)acetate + CoA. The enzyme catalyses ethanol + acetyl-CoA = ethyl acetate + CoA. It catalyses the reaction butan-1-ol + acetyl-CoA = butyl acetate + CoA. The catalysed reaction is butan-1-ol + propanoyl-CoA = butyl propanoate + CoA. Functionally, involved in the biosynthesis of volatile esters which confer kiwifruit flavor. Alcohol acyl transferase that can use a wide range of alcohols as substrate to produce esters. Exhibits acetyl-CoA:alcohol O-acyltransferase activity. The sequence is that of Alcohol acyltransferase 9 from Actinidia eriantha (Velvet vine).